The chain runs to 317 residues: uncharacterized protein (317 aa).

To M.avium MAV169.

This is an uncharacterized protein from Mycobacterium tuberculosis (strain CDC 1551 / Oshkosh).